A 215-amino-acid polypeptide reads, in one-letter code: Vesicle-trafficking protein SEC22b-B (215 aa).

The Cytoplasmic portion of the chain corresponds to Met1–Arg190. Positions Met6–Ile119 constitute a Longin domain. The v-SNARE coiled-coil homology domain maps to Asn134 to Ala194. Residues Ser191–Trp213 form a helical membrane-spanning segment. Residues Trp214 to Leu215 are Lumenal-facing.

This sequence belongs to the synaptobrevin family. Component of 2 distinct SNARE complexes.

Its subcellular location is the endoplasmic reticulum membrane. The protein localises to the endoplasmic reticulum-Golgi intermediate compartment membrane. It localises to the golgi apparatus. It is found in the cis-Golgi network membrane. The protein resides in the trans-Golgi network membrane. Its subcellular location is the melanosome. Its function is as follows. SNARE involved in targeting and fusion of ER-derived transport vesicles with the Golgi complex as well as Golgi-derived retrograde transport vesicles with the ER. This is Vesicle-trafficking protein SEC22b-B from Danio rerio (Zebrafish).